A 469-amino-acid chain; its full sequence is Putative pyridoxal-dependent decarboxylase domain-containing protein 2 (469 aa).

A coiled-coil region spans residues 12–40 (TLAEMGKNLKEAVKMLEDSQRRTEEENGK). Positions 28–44 (EDSQRRTEEENGKKLIS) are enriched in basic and acidic residues. Positions 28 to 47 (EDSQRRTEEENGKKLISRDI) are disordered.

The protein belongs to the group II decarboxylase family. It depends on pyridoxal 5'-phosphate as a cofactor.

The sequence is that of Putative pyridoxal-dependent decarboxylase domain-containing protein 2 (PDXDC2P) from Homo sapiens (Human).